The primary structure comprises 151 residues: Putative pre-16S rRNA nuclease (151 aa).

Belongs to the YqgF nuclease family.

The protein resides in the cytoplasm. Functionally, could be a nuclease involved in processing of the 5'-end of pre-16S rRNA. This chain is Putative pre-16S rRNA nuclease, found in Myxococcus xanthus (strain DK1622).